The following is a 2266-amino-acid chain: Little elongation complex subunit 1 (2266 aa).

The stretch at cysteine 23–histidine 186 forms a coiled coil. Disordered stretches follow at residues glycine 223 to threonine 259 and proline 517 to leucine 540. The span at proline 250 to threonine 259 shows a compositional bias: polar residues. 4 positions are modified to phosphoserine: serine 255, serine 533, serine 558, and serine 589. Positions glutamate 591 to glycine 623 are disordered. Positions proline 608–aspartate 617 are enriched in acidic residues. The residue at position 707 (serine 707) is a Phosphoserine. Threonine 832 is modified (phosphothreonine). A Phosphoserine modification is found at serine 925. The segment at serine 925–serine 955 is disordered. Over residues proline 940–serine 955 the composition is skewed to polar residues. Serine 958 bears the Phosphoserine mark. Disordered regions lie at residues valine 977–glutamate 1001 and threonine 1107–leucine 1133. Residues glutamine 984 to histidine 998 are compositionally biased toward polar residues. Lysine 1218 carries the post-translational modification N6-acetyllysine. Disordered stretches follow at residues threonine 1295–leucine 1372, alanine 1467–leucine 1510, and asparagine 1543–glutamate 1707. Composition is skewed to polar residues over residues arginine 1306–threonine 1319, glutamate 1328–serine 1344, asparagine 1487–phenylalanine 1505, asparagine 1565–serine 1588, and threonine 1594–leucine 1605. Residue serine 1588 is modified to Phosphoserine. Low complexity-rich tracts occupy residues aspartate 1609–threonine 1620 and alanine 1637–proline 1671. Serine 1617 is subject to Phosphoserine. Phosphothreonine is present on threonine 1642. A phosphoserine mark is found at serine 1692, serine 1697, serine 1699, serine 1701, serine 1712, serine 1838, and serine 1854. Positions threonine 1809–leucine 1902 are disordered. Residues leucine 1825–arginine 1843 are compositionally biased toward polar residues. Residues cysteine 1889–proline 1901 are compositionally biased toward polar residues. Serine 1903 carries the phosphoserine modification.

It belongs to the ICE1 family. In terms of assembly, component of the little elongation complex (LEC), at least composed of ELL (ELL, ELL2 or ELL3), ZC3H8, ICE1 and ICE2. Interacts (via N-terminus domain) with ELL. Interacts (via C-terminus domain) with ICE2 and ZC3H8.

It localises to the nucleus. The protein resides in the cajal body. In terms of biological role, component of the little elongation complex (LEC), a complex required to regulate small nuclear RNA (snRNA) gene transcription by RNA polymerase II and III. Specifically acts as a scaffold protein that promotes the LEC complex formation and recruitment and RNA polymerase II occupancy at snRNA genes in subnuclear bodies. In Homo sapiens (Human), this protein is Little elongation complex subunit 1 (ICE1).